A 165-amino-acid chain; its full sequence is Acireductone dioxygenase (165 aa).

His90, His92, Glu96, and His134 together coordinate Fe(2+). Ni(2+)-binding residues include His90, His92, Glu96, and His134.

Belongs to the acireductone dioxygenase (ARD) family. In terms of assembly, monomer. Fe(2+) serves as cofactor. Ni(2+) is required as a cofactor.

The catalysed reaction is 1,2-dihydroxy-5-(methylsulfanyl)pent-1-en-3-one + O2 = 3-(methylsulfanyl)propanoate + CO + formate + 2 H(+). It catalyses the reaction 1,2-dihydroxy-5-(methylsulfanyl)pent-1-en-3-one + O2 = 4-methylsulfanyl-2-oxobutanoate + formate + 2 H(+). The protein operates within amino-acid biosynthesis; L-methionine biosynthesis via salvage pathway; L-methionine from S-methyl-5-thio-alpha-D-ribose 1-phosphate: step 5/6. Its function is as follows. Catalyzes 2 different reactions between oxygen and the acireductone 1,2-dihydroxy-3-keto-5-methylthiopentene (DHK-MTPene) depending upon the metal bound in the active site. Fe-containing acireductone dioxygenase (Fe-ARD) produces formate and 2-keto-4-methylthiobutyrate (KMTB), the alpha-ketoacid precursor of methionine in the methionine recycle pathway. Ni-containing acireductone dioxygenase (Ni-ARD) produces methylthiopropionate, carbon monoxide and formate, and does not lie on the methionine recycle pathway. The sequence is that of Acireductone dioxygenase from Rhodopseudomonas palustris (strain ATCC BAA-98 / CGA009).